Reading from the N-terminus, the 411-residue chain is uncharacterized protein (411 aa).

Residues 32–108 (LGGDPAPKPT…PEHPRRIPIP (77 aa)) are disordered.

This is an uncharacterized protein from Ictalurid herpesvirus 1 (strain Auburn) (IcHV-1).